Consider the following 590-residue polypeptide: MLRIAQALDTQLREAMQRAFPDVDALLDPQLAPANKPEFGDFQANGALPLAKPLKQAPRLIAGAIVEALQADPAFAALCLEPQIAGPGFINLTIRPERLAAEVSARLGDPRLGVPEVQSDAAVVVDFSSPNIAKEMHVGHLRSTIIGDSLARVLEFRGHRVLRLNHVGDWGTQFGMLITHLKQVAPETLNRADAVDLGDLVAFYREAKKRFDEDEAFQATSREEVVKLQGGDPVSLKAWGLLCDQSRREFQKIYDRLDIRLSERGESFYNPYLASVLSGLKEADLLVTDDGAECVFLEGVNGKDGKPLPVIVRKSDGGFNYATTDLAAIRYRFALAPDGDGARRVIYVTDAGQANHFAGVFQVAKRANWIPEHGRLEHVPFGLVQGEDGKKLKTRSGDTVRLRDLLDEAVERAEADLRRRLEEEGRSEDDQFIEHVAGTVGLAAVKYADLSQNRITNYQFSFDRMLALQGNTAPYLLYAVVRIAGIARKGGDLEAEAGMLQFSEPQEWSLVRELLKFDAVIAEVEEELLPNRLCSYLFELSQVFNRFYDQVPVLKAEGQSLPSRLALCRLTADTLKSGLGLLGIATLERM.

Positions 130-140 (PNIAKEMHVGH) match the 'HIGH' region motif.

This sequence belongs to the class-I aminoacyl-tRNA synthetase family. As to quaternary structure, monomer.

Its subcellular location is the cytoplasm. It carries out the reaction tRNA(Arg) + L-arginine + ATP = L-arginyl-tRNA(Arg) + AMP + diphosphate. The chain is Arginine--tRNA ligase from Synechococcus sp. (strain CC9311).